A 646-amino-acid chain; its full sequence is Leukotriene A-4 hydrolase homolog (646 aa).

A peptide-binding positions include 172-174 (QCQ) and 307-312 (PYGGME). Residue His336 coordinates Zn(2+). Glu337 functions as the Proton acceptor in the catalytic mechanism. The Zn(2+) site is built by His340 and Glu359. Tyr424 acts as the Proton donor in catalysis.

This sequence belongs to the peptidase M1 family. The cofactor is Zn(2+).

Its subcellular location is the cytoplasm. The protein resides in the nucleus. It carries out the reaction leukotriene A4 + H2O = leukotriene B4. It participates in lipid metabolism; leukotriene B4 biosynthesis. Aminopeptidase that preferentially cleaves tripeptides. Also has low epoxide hydrolase activity (in vitro). Can hydrolyze an epoxide moiety of LTA(4) to form LTB(4) (in vitro). The polypeptide is Leukotriene A-4 hydrolase homolog (Botryotinia fuckeliana (strain B05.10) (Noble rot fungus)).